A 446-amino-acid chain; its full sequence is Phosphoglucosamine mutase (446 aa).

The Phosphoserine intermediate role is filled by Ser99. Mg(2+) contacts are provided by Ser99, Asp242, Asp244, and Asp246. Ser99 carries the post-translational modification Phosphoserine.

Belongs to the phosphohexose mutase family. The cofactor is Mg(2+). Post-translationally, activated by phosphorylation.

It carries out the reaction alpha-D-glucosamine 1-phosphate = D-glucosamine 6-phosphate. Its function is as follows. Catalyzes the conversion of glucosamine-6-phosphate to glucosamine-1-phosphate. The sequence is that of Phosphoglucosamine mutase from Campylobacter hominis (strain ATCC BAA-381 / DSM 21671 / CCUG 45161 / LMG 19568 / NCTC 13146 / CH001A).